The chain runs to 164 residues: Putative pre-16S rRNA nuclease (164 aa).

The protein belongs to the YqgF nuclease family.

It is found in the cytoplasm. In terms of biological role, could be a nuclease involved in processing of the 5'-end of pre-16S rRNA. This chain is Putative pre-16S rRNA nuclease, found in Caulobacter sp. (strain K31).